The chain runs to 59 residues: uncharacterized protein (59 aa).

Positions 1–59 (MAKKPGENTGKNGGIYQEVGPRGGKKDNFATVKDNERLPPTTKPGNGWVLDKRTPDSKK) are disordered. Basic and acidic residues-rich tracts occupy residues 24 to 37 (GKKDNFATVKDNER) and 50 to 59 (LDKRTPDSKK).

This is an uncharacterized protein from Salmonella phage P22 (Bacteriophage P22).